The chain runs to 356 residues: UDP-N-acetylglucosamine--N-acetylmuramyl-(pentapeptide) pyrophosphoryl-undecaprenol N-acetylglucosamine transferase (356 aa).

Residues serine 198 and glutamine 289 each contribute to the UDP-N-acetyl-alpha-D-glucosamine site.

Belongs to the glycosyltransferase 28 family. MurG subfamily.

The protein resides in the cell membrane. It carries out the reaction Mur2Ac(oyl-L-Ala-gamma-D-Glu-L-Lys-D-Ala-D-Ala)-di-trans,octa-cis-undecaprenyl diphosphate + UDP-N-acetyl-alpha-D-glucosamine = beta-D-GlcNAc-(1-&gt;4)-Mur2Ac(oyl-L-Ala-gamma-D-Glu-L-Lys-D-Ala-D-Ala)-di-trans,octa-cis-undecaprenyl diphosphate + UDP + H(+). It functions in the pathway cell wall biogenesis; peptidoglycan biosynthesis. In terms of biological role, cell wall formation. Catalyzes the transfer of a GlcNAc subunit on undecaprenyl-pyrophosphoryl-MurNAc-pentapeptide (lipid intermediate I) to form undecaprenyl-pyrophosphoryl-MurNAc-(pentapeptide)GlcNAc (lipid intermediate II). The polypeptide is UDP-N-acetylglucosamine--N-acetylmuramyl-(pentapeptide) pyrophosphoryl-undecaprenol N-acetylglucosamine transferase (Streptococcus thermophilus (strain ATCC BAA-491 / LMD-9)).